Here is an 89-residue protein sequence, read N- to C-terminus: Small ribosomal subunit protein bS20 (89 aa).

Positions 1-28 are disordered; it reads MTLANIKSAKKRAVQSEKSRQHNASQRS.

It belongs to the bacterial ribosomal protein bS20 family.

In terms of biological role, binds directly to 16S ribosomal RNA. In Mannheimia succiniciproducens (strain KCTC 0769BP / MBEL55E), this protein is Small ribosomal subunit protein bS20.